The sequence spans 173 residues: Endoribonuclease YbeY (173 aa).

Positions 126, 130, and 136 each coordinate Zn(2+).

It belongs to the endoribonuclease YbeY family. Requires Zn(2+) as cofactor.

The protein resides in the cytoplasm. Functionally, single strand-specific metallo-endoribonuclease involved in late-stage 70S ribosome quality control and in maturation of the 3' terminus of the 16S rRNA. This Sinorhizobium fredii (strain NBRC 101917 / NGR234) protein is Endoribonuclease YbeY.